Reading from the N-terminus, the 166-residue chain is Bacterial non-heme ferritin (166 aa).

The Ferritin-like diiron domain maps to 2–145 (LSKELLAALN…THIDYLTRIG (144 aa)). Positions 17, 50, 53, 94, and 127 each coordinate Fe cation.

This sequence belongs to the ferritin family. Prokaryotic subfamily.

It is found in the cytoplasm. The catalysed reaction is 4 Fe(2+) + O2 + 6 H2O = 4 iron(III) oxide-hydroxide + 12 H(+). In terms of biological role, iron-storage protein. The sequence is that of Bacterial non-heme ferritin (ftnA) from Staphylococcus epidermidis (strain ATCC 12228 / FDA PCI 1200).